The chain runs to 417 residues: Serine hydroxymethyltransferase (417 aa).

(6S)-5,6,7,8-tetrahydrofolate is bound by residues L121 and 125–127; that span reads GHL. The residue at position 229 (K229) is an N6-(pyridoxal phosphate)lysine. A (6S)-5,6,7,8-tetrahydrofolate-binding site is contributed by 355 to 357; sequence SPF.

It belongs to the SHMT family. In terms of assembly, homodimer. Pyridoxal 5'-phosphate serves as cofactor.

It localises to the cytoplasm. It catalyses the reaction (6R)-5,10-methylene-5,6,7,8-tetrahydrofolate + glycine + H2O = (6S)-5,6,7,8-tetrahydrofolate + L-serine. The protein operates within one-carbon metabolism; tetrahydrofolate interconversion. Its pathway is amino-acid biosynthesis; glycine biosynthesis; glycine from L-serine: step 1/1. Its function is as follows. Catalyzes the reversible interconversion of serine and glycine with tetrahydrofolate (THF) serving as the one-carbon carrier. This reaction serves as the major source of one-carbon groups required for the biosynthesis of purines, thymidylate, methionine, and other important biomolecules. Also exhibits THF-independent aldolase activity toward beta-hydroxyamino acids, producing glycine and aldehydes, via a retro-aldol mechanism. This is Serine hydroxymethyltransferase from Shewanella oneidensis (strain ATCC 700550 / JCM 31522 / CIP 106686 / LMG 19005 / NCIMB 14063 / MR-1).